Here is a 128-residue protein sequence, read N- to C-terminus: Small ribosomal subunit protein bS6 (128 aa).

The interval 97 to 128 (TTPSPMMKEEKSRSLTAAPATDEAKPAEAESA) is disordered. Positions 118-128 (DEAKPAEAESA) are enriched in basic and acidic residues.

The protein belongs to the bacterial ribosomal protein bS6 family.

In terms of biological role, binds together with bS18 to 16S ribosomal RNA. This is Small ribosomal subunit protein bS6 from Aromatoleum aromaticum (strain DSM 19018 / LMG 30748 / EbN1) (Azoarcus sp. (strain EbN1)).